Consider the following 362-residue polypeptide: Flagellar P-ring protein (362 aa).

Residues 1-15 (MLAAALMSAAFGAHA) form the signal peptide.

It belongs to the FlgI family. As to quaternary structure, the basal body constitutes a major portion of the flagellar organelle and consists of four rings (L,P,S, and M) mounted on a central rod.

The protein resides in the periplasm. It localises to the bacterial flagellum basal body. Functionally, assembles around the rod to form the L-ring and probably protects the motor/basal body from shearing forces during rotation. In Pseudomonas fluorescens (strain Pf0-1), this protein is Flagellar P-ring protein.